A 142-amino-acid polypeptide reads, in one-letter code: Nucleoside diphosphate kinase (142 aa).

Residues K9, F57, R85, T91, R102, and N112 each coordinate ATP. The tract at residues 87-106 is disordered; it reads AMGATDPAKSEKGTVRGDLG. The active-site Pros-phosphohistidine intermediate is the H115.

Belongs to the NDK family. In terms of assembly, homotetramer. Mg(2+) is required as a cofactor.

It is found in the cytoplasm. It catalyses the reaction a 2'-deoxyribonucleoside 5'-diphosphate + ATP = a 2'-deoxyribonucleoside 5'-triphosphate + ADP. The catalysed reaction is a ribonucleoside 5'-diphosphate + ATP = a ribonucleoside 5'-triphosphate + ADP. Functionally, major role in the synthesis of nucleoside triphosphates other than ATP. The ATP gamma phosphate is transferred to the NDP beta phosphate via a ping-pong mechanism, using a phosphorylated active-site intermediate. The chain is Nucleoside diphosphate kinase from Dehalococcoides mccartyi (strain ATCC BAA-2266 / KCTC 15142 / 195) (Dehalococcoides ethenogenes (strain 195)).